The primary structure comprises 148 residues: D-aminoacyl-tRNA deacylase (148 aa).

The Gly-cisPro motif, important for rejection of L-amino acids motif lies at 137–138 (GP).

The protein belongs to the DTD family. In terms of assembly, homodimer.

It is found in the cytoplasm. The enzyme catalyses glycyl-tRNA(Ala) + H2O = tRNA(Ala) + glycine + H(+). It carries out the reaction a D-aminoacyl-tRNA + H2O = a tRNA + a D-alpha-amino acid + H(+). Functionally, an aminoacyl-tRNA editing enzyme that deacylates mischarged D-aminoacyl-tRNAs. Also deacylates mischarged glycyl-tRNA(Ala), protecting cells against glycine mischarging by AlaRS. Acts via tRNA-based rather than protein-based catalysis; rejects L-amino acids rather than detecting D-amino acids in the active site. By recycling D-aminoacyl-tRNA to D-amino acids and free tRNA molecules, this enzyme counteracts the toxicity associated with the formation of D-aminoacyl-tRNA entities in vivo and helps enforce protein L-homochirality. This is D-aminoacyl-tRNA deacylase from Ligilactobacillus salivarius (strain UCC118) (Lactobacillus salivarius).